The following is a 768-amino-acid chain: Lon protease (768 aa).

Residues 4–198 enclose the Lon N-terminal domain; the sequence is APFLPIRDLV…RILDEIVAEM (195 aa). 349-356 is an ATP binding site; the sequence is GPPGIGKT. The Lon proteolytic domain occupies 586–768; it reads TGKIGVVNGL…DDVSKLVFVK (183 aa). Active-site residues include serine 674 and lysine 717.

Belongs to the peptidase S16 family. Homohexamer. Organized in a ring with a central cavity.

Its subcellular location is the cytoplasm. The enzyme catalyses Hydrolysis of proteins in presence of ATP.. ATP-dependent serine protease that mediates the selective degradation of mutant and abnormal proteins as well as certain short-lived regulatory proteins. Required for cellular homeostasis and for survival from DNA damage and developmental changes induced by stress. Degrades polypeptides processively to yield small peptide fragments that are 5 to 10 amino acids long. Binds to DNA in a double-stranded, site-specific manner. The protein is Lon protease of Fusobacterium nucleatum subsp. nucleatum (strain ATCC 25586 / DSM 15643 / BCRC 10681 / CIP 101130 / JCM 8532 / KCTC 2640 / LMG 13131 / VPI 4355).